The sequence spans 341 residues: UDP-3-O-(3-hydroxymyristoyl)glucosamine N-acyltransferase (341 aa).

The active-site Proton acceptor is the histidine 239.

Belongs to the transferase hexapeptide repeat family. LpxD subfamily. As to quaternary structure, homotrimer.

It catalyses the reaction a UDP-3-O-[(3R)-3-hydroxyacyl]-alpha-D-glucosamine + a (3R)-hydroxyacyl-[ACP] = a UDP-2-N,3-O-bis[(3R)-3-hydroxyacyl]-alpha-D-glucosamine + holo-[ACP] + H(+). The enzyme catalyses UDP-3-O-[(3R)-3-hydroxytetradecanoyl]-alpha-D-glucosamine + (3R)-hydroxytetradecanoyl-[ACP] = UDP-2-N,3-O-bis[(3R)-3-hydroxytetradecanoyl]-alpha-D-glucosamine + holo-[ACP] + H(+). The protein operates within glycolipid biosynthesis; lipid IV(A) biosynthesis; lipid IV(A) from (3R)-3-hydroxytetradecanoyl-[acyl-carrier-protein] and UDP-N-acetyl-alpha-D-glucosamine: step 3/6. In terms of biological role, catalyzes the N-acylation of UDP-3-O-(hydroxytetradecanoyl)glucosamine using 3-hydroxytetradecanoyl-ACP as the acyl donor. Is involved in the biosynthesis of lipid A, a phosphorylated glycolipid that anchors the lipopolysaccharide to the outer membrane of the cell. This chain is UDP-3-O-(3-hydroxymyristoyl)glucosamine N-acyltransferase, found in Shigella dysenteriae serotype 1 (strain Sd197).